A 439-amino-acid chain; its full sequence is Sorting nexin-31 (439 aa).

The 109-residue stretch at 1–109 (MKMHFCIPVS…EFLTLVQLHT (109 aa)) folds into the PX domain. The segment at 384–409 (TEQSPEMQIEVPEQGRSKKHPSQPSQ) is disordered.

Belongs to the sorting nexin family. As to quaternary structure, interacts with CCDC22, CCDC93, VPS26C and VPS35L, associates with the retriever and CCC complexes.

Its function is as follows. May be involved in protein trafficking. The sequence is that of Sorting nexin-31 (Snx31) from Mus musculus (Mouse).